Consider the following 234-residue polypeptide: tRNA (guanine-N(1)-)-methyltransferase (234 aa).

S-adenosyl-L-methionine-binding positions include Gly115 and 135–140; that span reads VGDYIL.

The protein belongs to the RNA methyltransferase TrmD family. As to quaternary structure, homodimer.

The protein resides in the cytoplasm. It carries out the reaction guanosine(37) in tRNA + S-adenosyl-L-methionine = N(1)-methylguanosine(37) in tRNA + S-adenosyl-L-homocysteine + H(+). In terms of biological role, specifically methylates guanosine-37 in various tRNAs. In Rickettsia akari (strain Hartford), this protein is tRNA (guanine-N(1)-)-methyltransferase.